A 946-amino-acid chain; its full sequence is Bifunctional glutamine synthetase adenylyltransferase/adenylyl-removing enzyme (946 aa).

The adenylyl removase stretch occupies residues 1–440 (MKPLSSPLQQ…VFNELIGDDE (440 aa)). The segment at 449-946 (SEQWRELWQD…ASWQKWLVEE (498 aa)) is adenylyl transferase.

It belongs to the GlnE family. Mg(2+) serves as cofactor.

The catalysed reaction is [glutamine synthetase]-O(4)-(5'-adenylyl)-L-tyrosine + phosphate = [glutamine synthetase]-L-tyrosine + ADP. It catalyses the reaction [glutamine synthetase]-L-tyrosine + ATP = [glutamine synthetase]-O(4)-(5'-adenylyl)-L-tyrosine + diphosphate. Its function is as follows. Involved in the regulation of glutamine synthetase GlnA, a key enzyme in the process to assimilate ammonia. When cellular nitrogen levels are high, the C-terminal adenylyl transferase (AT) inactivates GlnA by covalent transfer of an adenylyl group from ATP to specific tyrosine residue of GlnA, thus reducing its activity. Conversely, when nitrogen levels are low, the N-terminal adenylyl removase (AR) activates GlnA by removing the adenylyl group by phosphorolysis, increasing its activity. The regulatory region of GlnE binds the signal transduction protein PII (GlnB) which indicates the nitrogen status of the cell. The sequence is that of Bifunctional glutamine synthetase adenylyltransferase/adenylyl-removing enzyme from Escherichia coli (strain K12 / MC4100 / BW2952).